The chain runs to 320 residues: Cytochrome f (320 aa).

The signal sequence occupies residues 1-35; it reads MQTINTFSWIKEQITRSISISLILYIITRSSIANA. Positions 36, 56, 59, and 60 each coordinate heme. The helical transmembrane segment at 286 to 305 threads the bilayer; it reads IQGLLFFFASVILAQIFLVL.

Belongs to the cytochrome f family. In terms of assembly, the 4 large subunits of the cytochrome b6-f complex are cytochrome b6, subunit IV (17 kDa polypeptide, petD), cytochrome f and the Rieske protein, while the 4 small subunits are PetG, PetL, PetM and PetN. The complex functions as a dimer. It depends on heme as a cofactor.

The protein localises to the plastid. Its subcellular location is the chloroplast thylakoid membrane. In terms of biological role, component of the cytochrome b6-f complex, which mediates electron transfer between photosystem II (PSII) and photosystem I (PSI), cyclic electron flow around PSI, and state transitions. This chain is Cytochrome f (petA), found in Spinacia oleracea (Spinach).